The sequence spans 220 residues: 2-hydroxy-3-keto-5-methylthiopentenyl-1-phosphate phosphatase (220 aa).

It belongs to the HAD-like hydrolase superfamily. MtnX family.

The catalysed reaction is 2-hydroxy-5-methylsulfanyl-3-oxopent-1-enyl phosphate + H2O = 1,2-dihydroxy-5-(methylsulfanyl)pent-1-en-3-one + phosphate. Its pathway is amino-acid biosynthesis; L-methionine biosynthesis via salvage pathway; L-methionine from S-methyl-5-thio-alpha-D-ribose 1-phosphate: step 4/6. Its function is as follows. Dephosphorylates 2-hydroxy-3-keto-5-methylthiopentenyl-1-phosphate (HK-MTPenyl-1-P) yielding 1,2-dihydroxy-3-keto-5-methylthiopentene (DHK-MTPene). This Geobacillus thermodenitrificans (strain NG80-2) protein is 2-hydroxy-3-keto-5-methylthiopentenyl-1-phosphate phosphatase.